We begin with the raw amino-acid sequence, 1373 residues long: DNA-directed RNA polymerase subunit beta'' (1373 aa).

Zn(2+) is bound by residues Cys-220, Cys-291, Cys-298, and Cys-301.

The protein belongs to the RNA polymerase beta' chain family. RpoC2 subfamily. In plastids the minimal PEP RNA polymerase catalytic core is composed of four subunits: alpha, beta, beta', and beta''. When a (nuclear-encoded) sigma factor is associated with the core the holoenzyme is formed, which can initiate transcription. It depends on Zn(2+) as a cofactor.

It localises to the plastid. Its subcellular location is the chloroplast. It carries out the reaction RNA(n) + a ribonucleoside 5'-triphosphate = RNA(n+1) + diphosphate. DNA-dependent RNA polymerase catalyzes the transcription of DNA into RNA using the four ribonucleoside triphosphates as substrates. In Silene latifolia (White campion), this protein is DNA-directed RNA polymerase subunit beta''.